The sequence spans 448 residues: Proton extrusion protein PxcA (448 aa).

4 helical membrane passes run 231–251, 323–343, 372–392, and 408–428; these read ILLLIIIPLLIHQLTKTFFLI, IDSIANIFADLFSFIAFVLVL, LIILFTDMFVGFHSPHGWEVI, and FNFLFIATFPVILDTVLKYWI.

It belongs to the CemA family.

The protein resides in the cell inner membrane. Functionally, required for H(+) efflux immediately after light irradiation to form a rapid H(+) concentration gradient across the thylakoid membranes. Together with PxcL, contributes to transient H(+) uptake following dark to light transition. The protein is Proton extrusion protein PxcA of Rippkaea orientalis (strain PCC 8801 / RF-1) (Cyanothece sp. (strain PCC 8801)).